Here is a 195-residue protein sequence, read N- to C-terminus: dCTP deaminase (195 aa).

DCTP contacts are provided by residues 105 to 110 (RSSLGR), Asp123, 131 to 133 (TLE), Gln152, Tyr166, Lys173, and Gln177. Glu133 acts as the Proton donor/acceptor in catalysis. The interval 159–195 (KTPADRPYGAERGSKYQGQSGPQASKIQGDREFGGDQ) is disordered. The segment covering 160-172 (TPADRPYGAERGS) has biased composition (basic and acidic residues). A compositionally biased stretch (polar residues) spans 174-184 (YQGQSGPQASK). A compositionally biased stretch (basic and acidic residues) spans 186-195 (QGDREFGGDQ).

Belongs to the dCTP deaminase family. Homotrimer.

The enzyme catalyses dCTP + H2O + H(+) = dUTP + NH4(+). It participates in pyrimidine metabolism; dUMP biosynthesis; dUMP from dCTP (dUTP route): step 1/2. Its function is as follows. Catalyzes the deamination of dCTP to dUTP. The polypeptide is dCTP deaminase (Haloarcula marismortui (strain ATCC 43049 / DSM 3752 / JCM 8966 / VKM B-1809) (Halobacterium marismortui)).